A 324-amino-acid chain; its full sequence is Methyltransferase pytC (324 aa).

This sequence belongs to the methyltransferase superfamily. LaeA methyltransferase family.

It participates in secondary metabolite biosynthesis. Its function is as follows. Methyltransferase; part of the gene cluster that mediates the biosynthesis of pyranterreones, a family of antioxidative compounds. The first step of pyranonigrins biosynthesis is performed by the hybrid PKS-NRPS synthetase pytA that condenses 4 malonyl-CoA units ato the acetyl starter unit by the modular PKS of pytA. The acyl chain is then connected to an L-serine through the amide bond by the modular NRPS of pytA. A tetramic acid is formed and released from the PKS-NRPS pytA to give pyranterreone 5 with the help of the thioesterase pytI. Pyranterreone 5 could be methylated by pytC to afford pyranterreone 6. Both pyranterreones 5 and 6 are subsequently oxidized by the FAD-linked oxidoreductase pytB and the cytochrome P450 monooxygenase pytD to form the fused gamma-pyrone core, resulting in pyranterreones 7 and 11, respectively. The hydroxy group at C-8 of pyranterreones 7 and 11 are dehydrated by the aspartyl protease pytH to form a delta-7 double bond to give pyranterreones 3 and 1, 2 accordingly. The exo-methylene of pyranterreone 3 could be reduced into a pendant methyl by reductase pytE to provide pyranterreone 4, also known as cordylactam. Pyranterreone 4 can be reconverted to pyranterreone 3 through pytB-catalyzed dehydrogenation or further oxidized to pyranterreones 9 and 10. The protein is Methyltransferase pytC of Aspergillus terreus (strain NIH 2624 / FGSC A1156).